A 347-amino-acid polypeptide reads, in one-letter code: Probable RNA methyltransferase Lcho_2507 (347 aa).

The Proton acceptor role is filled by glutamate 89. The 227-residue stretch at 92-318 (LLPRDGLCVS…TKLRQSAGQD (227 aa)) folds into the Radical SAM core domain. A disulfide bond links cysteine 99 and cysteine 323. The [4Fe-4S] cluster site is built by cysteine 106, cysteine 110, and cysteine 113. Residues 151–152 (GE), serine 181, 204–206 (SLH), and asparagine 280 each bind S-adenosyl-L-methionine. Cysteine 323 acts as the S-methylcysteine intermediate in catalysis.

Belongs to the radical SAM superfamily. RlmN family. Requires [4Fe-4S] cluster as cofactor.

It is found in the cytoplasm. This chain is Probable RNA methyltransferase Lcho_2507, found in Leptothrix cholodnii (strain ATCC 51168 / LMG 8142 / SP-6) (Leptothrix discophora (strain SP-6)).